Here is a 3341-residue protein sequence, read N- to C-terminus: Genome polyprotein (3341 aa).

Basic and acidic residues-rich tracts occupy residues 1–14 (MKRK…KAPG) and 24–35 (REGRRKDKDKGG). Residues 1 to 57 (MKRKDLEARGKAPGRDSSTPFWGREGRRKDKDKGGESPSNRQVTLKTPIQSGRRAGK) form a disordered region. The Cytoplasmic portion of the chain corresponds to 1 to 120 (MKRKDLEARG…LESRRTTGNP (120 aa)). Residues 37-50 (SPSNRQVTLKTPIQ) are compositionally biased toward polar residues. The tract at residues 55 to 97 (AGKRQRVGLLGRLGVGWGSFLQEDIVQALIHMALVLHALFASI) is hydrophobic; homodimerization of capsid protein C. A propeptide spans 117–136 (TGNPMTLAFILGFLTVLCGC) (ER anchor for the capsid protein C, removed in mature form by serine protease NS3). The helical transmembrane segment at 121–141 (MTLAFILGFLTVLCGCVVIDM) threads the bilayer. Over 142 to 245 (QVSTTRGTEI…AFKTIRENKT (104 aa)) the chain is Extracellular. 2 N-linked (GlcNAc...) asparagine; by host glycosylation sites follow: Asn-157 and Asn-243. A helical membrane pass occupies residues 246 to 262 (IFIVALLCVAIAKRWPT). Residue Trp-263 is a topological domain, cytoplasmic. Residues 264–278 (VVILLAIGTWTTVKG) traverse the membrane as a helical segment. Residues 279–665 (EFVEPLYTLK…GVWQDLVGKF (387 aa)) are Extracellular-facing. Asn-339 carries an N-linked (GlcNAc...) asparagine; by host glycan. The involved in fusion stretch occupies residues 371 to 384 (NRGWGTGCFKWGIG). N-linked (GlcNAc...) asparagine; by host glycans are attached at residues Asn-399, Asn-411, Asn-575, and Asn-611. A helical transmembrane segment spans residues 666-686 (SVGAFFSNTALLVILVLAALI). Residues 687–689 (DKR) lie on the Cytoplasmic side of the membrane. Residues 690 to 705 (IAFLLVLGGYFYYVRA) form a helical membrane-spanning segment. At 706–1138 (DLGCGIDTTR…AKTRTSTLTR (433 aa)) the chain is on the extracellular side. N-linked (GlcNAc...) asparagine; by host glycosylation is found at Asn-794, Asn-896, Asn-993, and Asn-1027. Residues 1139–1159 (LFLTILAMALFGLPNLFSSVG) traverse the membrane as a helical segment. Residues 1160-1178 (LSAWVLLVASSSAQPQDLS) lie on the Cytoplasmic side of the membrane. Residues 1179–1199 (MNLWIVLQTGSSAVLLLGYMI) form a helical membrane-spanning segment. At 1200-1204 (RRKLA) the chain is on the lumenal side. The chain crosses the membrane as a helical span at residues 1205 to 1225 (MVLGVHHLVTLMCVQFLFSAV). Topologically, residues 1226–1231 (DRYQKY) are cytoplasmic. A helical transmembrane segment spans residues 1232-1252 (LYGLLELMASVVLLSAYKSVL). Residues 1253-1261 (QALPPEVLC) lie on the Lumenal side of the membrane. The chain crosses the membrane as a helical span at residues 1262 to 1282 (FSLVMGWKTALSLATVVFLIF). The Cytoplasmic portion of the chain corresponds to 1283 to 1303 (SLNAMYKYACQYHNPRNGYRD). The helical transmembrane segment at 1304–1324 (SGANLWFWTVSLASAGGIWAA) threads the bilayer. Topologically, residues 1325 to 1326 (EK) are lumenal. Residues 1327-1347 (AHQPTVAAVLAFTMVVLFLYM) form a helical membrane-spanning segment. Topologically, residues 1348-1403 (EQTNVSMELEFISAGETPEGVSTENDDGINIPDLKGRYGEDGIVVGAASSSGYLPE) are cytoplasmic. The segment at residues 1404–1424 (LVFVFLLGFAVTSTSYFLGAL) is an intramembrane region (helical). The Cytoplasmic segment spans residues 1425 to 2089 (YLLIATSTNL…TERSLTVVMA (665 aa)). The region spanning 1452-1630 (SDDLLGLGGP…KPTDVTESLN (179 aa)) is the Peptidase S7 domain. Catalysis depends on charge relay system; for serine protease NS3 activity residues His-1506, Asp-1530, and Ser-1589. Positions 1627–1780 (ESLNCDSTRR…SNYAISDQSI (154 aa)) constitute a Helicase ATP-binding domain. Residue 1640–1647 (WHPGKGKT) participates in ATP binding. The DECH box motif lies at 1729-1732 (DECH). Residues 1793–1947 (NVQKSVGAKK…TFMLEEAAYS (155 aa)) enclose the Helicase C-terminal domain. Residues 2090–2110 (FVLGVSIMLSCFIAVWALCFL) traverse the membrane as a helical segment. The Lumenal segment spans residues 2111-2145 (FSLFRPKKATYEQMPSSDPLSGGVLVSTPSVLYCM). The chain crosses the membrane as a helical span at residues 2146 to 2166 (GVPLGFCVVITLAMFLVYPVL). At 2167–2178 (YKSIGNRSYMDS) the chain is on the cytoplasmic side. The helical transmembrane segment at 2179–2199 (DLVKWVILGSCLICGVLAWEM) threads the bilayer. The Lumenal segment spans residues 2200 to 2242 (RMFPNIRSDLMELVKAVKEPEEVVNSGPSFPSWEIAQGKGATM). The chain crosses the membrane as a helical span at residues 2243–2263 (LDSLQVFFFITVLSTKFLYWF). At 2264-2302 (QENWTARMYAMKHPEMVSSIGGFRFDEIPFRAVLPSGFA) the chain is on the cytoplasmic side. The segment at residues 2303–2323 (IVAIASLPSVVVGLLAAGVFM) is an intramembrane region (helical). Residues 2324–2366 (AIMYCQNKWNATPKILTALDARDQRHDRPTEITSRVPLENTRS) are Cytoplasmic-facing. A helical transmembrane segment spans residues 2367 to 2387 (IMYAFCLIFSLFWAFCTRSPG). The Lumenal portion of the chain corresponds to 2388-2412 (DFLRGSLVVGASMWQILHPRSKIHD). A helical transmembrane segment spans residues 2413–2433 (VMDFGSMVSAIGLLEMNYLFY). Residues 2434-3341 (RFMHIAARAL…SRYRRGNDVI (908 aa)) are Cytoplasmic-facing. An mRNA cap 0-1 NS5-type MT domain is found at 2454 to 2706 (ALEKSTTIGL…SPVLPKGTRA (253 aa)). Ser-2497 serves as a coordination point for S-adenosyl-L-methionine. The For 2'-O-MTase activity role is filled by Lys-2509. Residues Gly-2527, Trp-2528, Thr-2545, Ile-2546, Asp-2572, and Val-2573 each contribute to the S-adenosyl-L-methionine site. Asp-2587 (for 2'-O-MTase activity) is an active-site residue. Ile-2588 provides a ligand contact to S-adenosyl-L-methionine. Catalysis depends on for 2'-O-MTase activity residues Lys-2624 and Glu-2660. Residue Tyr-2662 participates in S-adenosyl-L-methionine binding. Zn(2+) contacts are provided by Glu-2881, His-2885, Cys-2890, and Cys-2893. A RdRp catalytic domain is found at 2970 to 3117 (KYLIADDIAG…STDNRDFSSA (148 aa)). Residues His-3152, Cys-3168, and Cys-3287 each contribute to the Zn(2+) site.

In the N-terminal section; belongs to the class I-like SAM-binding methyltransferase superfamily. mRNA cap 0-1 NS5-type methyltransferase family. As to quaternary structure, homodimer. In terms of assembly, forms heterodimers with envelope protein E in the endoplasmic reticulum and Golgi. Homodimer; in the endoplasmic reticulum and Golgi. As to quaternary structure, forms homodimers as well as homohexamers. NS1 may interact with NS4A. In terms of assembly, forms a heterodimer with serine protease NS3. May form homooligomers. Forms a heterodimer with NS2B. Interacts with NS4B. Interacts with unphosphorylated RNA-directed RNA polymerase NS5; this interaction stimulates RNA-directed RNA polymerase NS5 guanylyltransferase activity. As to quaternary structure, interacts with serine protease NS3. In terms of assembly, interacts with host STAT2; this interaction inhibits the phosphorylation of the latter, and, when all viral proteins are present (polyprotein), targets STAT2 for degradation. Genome polyprotein: Specific enzymatic cleavages in vivo yield mature proteins. Cleavages in the lumen of endoplasmic reticulum are performed by host signal peptidase, whereas cleavages in the cytoplasmic side are performed by serine protease NS3. Signal cleavage at the 2K-4B site requires a prior NS3 protease-mediated cleavage at the 4A-2K site. In terms of processing, cleaved in post-Golgi vesicles by a host furin, releasing the mature small envelope protein M, and peptide pr. This cleavage is incomplete as up to 30% of viral particles still carry uncleaved prM. Post-translationally, N-glycosylated. N-glycosylated. The excreted form is glycosylated and this is required for efficient secretion of the protein from infected cells. In terms of processing, phosphorylated on serines residues. This phosphorylation may trigger NS5 nuclear localization.

The protein resides in the virion. Its subcellular location is the host nucleus. It localises to the secreted. It is found in the virion membrane. The protein localises to the host endoplasmic reticulum membrane. The catalysed reaction is Selective hydrolysis of -Xaa-Xaa-|-Yaa- bonds in which each of the Xaa can be either Arg or Lys and Yaa can be either Ser or Ala.. It carries out the reaction RNA(n) + a ribonucleoside 5'-triphosphate = RNA(n+1) + diphosphate. It catalyses the reaction a ribonucleoside 5'-triphosphate + H2O = a ribonucleoside 5'-diphosphate + phosphate + H(+). The enzyme catalyses ATP + H2O = ADP + phosphate + H(+). The catalysed reaction is a 5'-end (5'-triphosphoguanosine)-ribonucleoside in mRNA + S-adenosyl-L-methionine = a 5'-end (N(7)-methyl 5'-triphosphoguanosine)-ribonucleoside in mRNA + S-adenosyl-L-homocysteine. It carries out the reaction a 5'-end (N(7)-methyl 5'-triphosphoguanosine)-ribonucleoside in mRNA + S-adenosyl-L-methionine = a 5'-end (N(7)-methyl 5'-triphosphoguanosine)-(2'-O-methyl-ribonucleoside) in mRNA + S-adenosyl-L-homocysteine + H(+). In terms of biological role, plays a role in virus budding by binding to the cell membrane and gathering the viral RNA into a nucleocapsid that forms the core of a mature virus particle. During virus entry, may induce genome penetration into the host cytoplasm after hemifusion induced by the surface proteins. Can migrate to the cell nucleus where it modulates host functions. Functionally, prevents premature fusion activity of envelope proteins in trans-Golgi by binding to envelope protein E at pH6.0. After virion release in extracellular space, gets dissociated from E dimers. Acts as a chaperone for envelope protein E during intracellular virion assembly by masking and inactivating envelope protein E fusion peptide. prM is the only viral peptide matured by host furin in the trans-Golgi network probably to avoid catastrophic activation of the viral fusion activity in acidic Golgi compartment prior to virion release. prM-E cleavage is inefficient, and many virions are only partially matured. These uncleaved prM would play a role in immune evasion. Its function is as follows. May play a role in virus budding. Exerts cytotoxic effects by activating a mitochondrial apoptotic pathway through M ectodomain. May display a viroporin activity. In terms of biological role, binds to host cell surface receptor and mediates fusion between viral and cellular membranes. Envelope protein is synthesized in the endoplasmic reticulum in the form of heterodimer with protein prM. They play a role in virion budding in the ER, and the newly formed immature particle is covered with 60 spikes composed of heterodimer between precursor prM and envelope protein E. The virion is transported to the Golgi apparatus where the low pH causes dissociation of PrM-E heterodimers and formation of E homodimers. prM-E cleavage is inefficient, and many virions are only partially matured. These uncleaved prM would play a role in immune evasion. Functionally, involved in immune evasion, pathogenesis and viral replication. Once cleaved off the polyprotein, is targeted to three destinations: the viral replication cycle, the plasma membrane and the extracellular compartment. May play a role in viral genome replication. Assist membrane bending and envelopment of genomic RNA at the endoplasmic reticulum. Excreted as a hexameric lipoparticle that plays a role against host immune response. Component of the viral RNA replication complex that functions in virion assembly and antagonizes the host immune response. Its function is as follows. Required cofactor for the serine protease function of NS3. May have membrane-destabilizing activity and form viroporins. In terms of biological role, displays three enzymatic activities: serine protease, NTPase and RNA helicase. NS3 serine protease, in association with NS2B, performs its autocleavage and cleaves the polyprotein at dibasic sites in the cytoplasm: C-prM, NS2A-NS2B, NS2B-NS3, NS3-NS4A, NS4A-2K and NS4B-NS5. NS3 RNA helicase binds RNA and unwinds dsRNA in the 3' to 5' direction. Functionally, regulates the ATPase activity of the NS3 helicase activity. NS4A allows NS3 helicase to conserve energy during unwinding. Functions as a signal peptide for NS4B and is required for the interferon antagonism activity of the latter. Its function is as follows. Inhibits interferon (IFN)-induced host STAT1 phosphorylation and nuclear translocation, thereby preventing the establishment of a cellular antiviral state by blocking the IFN-alpha/beta pathway. In terms of biological role, replicates the viral (+) and (-) RNA genome, and performs the capping of genomes in the cytoplasm. NS5 methylates viral RNA cap at guanine N-7 and ribose 2'-O positions. Besides its role in RNA genome replication, also prevents the establishment of cellular antiviral state by blocking the interferon-alpha/beta (IFN-alpha/beta) signaling pathway. Inhibits host TYK2 and STAT2 phosphorylation, thereby preventing activation of JAK-STAT signaling pathway. The protein is Genome polyprotein of Aedes (CFA flavivirus).